The chain runs to 689 residues: Dipeptidyl aminopeptidase BIII (689 aa).

The first 26 residues, 1–26, serve as a signal peptide directing secretion; the sequence is MRHPAFRLTLLASTVAFALAPQAAQA. Active-site charge relay system residues include Ser506, Asp593, and His625.

This sequence belongs to the peptidase S9C family. Monomer.

Its activity is regulated as follows. Strongly inhibited by the serine protease inhibitor diisopropyl fluorophosphate (DFP), chymostatin, leupeptin, 0.5 mM ZnCl(2), 10 mM o-phenanthlorine and N-tosyl-L-phenyl-alanyl chloromethyl ketone (TPCK), but not by N-tosyl-L-lysyl chloromethyl ketone (TLCK). Activity is not affected significantly by iodoacetate (IAA), L-trans-epoxysuccinyl-leucylamido(4-guanido)butane (E64), pepstatin A and phenylmethanesulfonyl fluoride (PMSF). Activity is stimulated by addition of 0.5 mM CaCl(2), 10 mM EDTA and N-ethylmaleimide (NEM). Its function is as follows. Exopeptidase that catalyzes the removal of dipeptide units (NH2-P2-P1- or -P1'-P2'-COOH) from the free amino or carboxy termini. Prefers substrates composed of bulky, hydrophobic amino acids at P1 and P1' positions. Has endopeptidase activity on N-terminally blocked peptide derivatives which contain aromatic amino acid residue at the P1 position. Exopeptidase activity is much higher than its endopeptidase activity. This chain is Dipeptidyl aminopeptidase BIII, found in Pseudoxanthomonas mexicana.